The primary structure comprises 1338 residues: MKHIKNEREEVFLEDDQAQHSQAELLSSKDENLQPSIPLSPVAFELDFSGNFQFISDNSSELLDIPKDKIIGHSVAEVLGTDGYNAFMRAVNCLLKDDSHSYHVRFQHSINANHANQNYYTAKGDLPSDEKITKPFDAIGILIRHPGSAIPAHTMWVVNPATNSLGSVSPLVTKLLDVIGFGASLLDKYLCDLRTSYHKHNSLDALPLPTPEFCQICEREIQSWFFELHSKFCLSTSTYESVVQAAQDSLLYFRSTLLEIQEGMQKDSSLVPVYKNEPLIVDADDYFFTDENKQTLSLCSFLSQVMYYLEVAIDITIPPVKIIVNFDKVDSLRVQSPRSEKATIELDNYNPSLENCSSAVIALWEDIKTAVDTKITGVLRLRNAIYYSERIRLEIDHHVQEIIDDVVSNLVTNHSSTSLGHLESKLAPSITFPDACDALEAEECITRPGSATNTPQSDRSLDINDLSRSSSYSRHLSHVSLSNPDFAIGSPMSQDSSNYSSPLHRRKASDSNFSDPRFDDLKYLSPNSSPRFVASDGPNRPASNGRSSLFSRGRASNLGDVGLRLPSPSPRIHTIVPNSAPEHPSINDYKILKPISKGAFGSVYLAQKRTTGDYFAIKILKKSNMIAKNQVINVRAERAILMSQGESPFVAKLYYTFQSKDYLYLVMEYLNGGDCGSLLKTMGVLDLDWIRTYIAETVLCLGDLHDRGIIHRDIKPENLLISQNGHLKLTDFGLSRVGYMKRHRRKQSSSIPVLDLRDRSSAISDLSLSTASSVLEAQSLITPERPKRPSLNEKLLSLDGTSIRLAGQSFNYENSAEDSPTATNTPTSQVDESNIFRSTDSPRVQPFFENKDPSKRFIGTPDYIAPEVILGNPGIKASDWWSLGCVVFEFLFGYPPFNAETPDQVFQNILARRINWPAEVFTAESSVALDLIDRLLCMNPANRLGANGVEEIKAHPFFKSVNWDTILEEDPPFVPKPFSPEDTVYFDSRGLKGFDFSEYYNQPTVTEAQKLEEERPASSIPQHVSGNRKGRLRSNTISTPEFGSFTYRNLDFLNKANRNTIQKLRKEHMAVKSAKTSVDDTFSQYMSRFKAKLSTSQSVGPVKSSRRASMADYEASTTTRVQDITTDSIDSIDDFDSLKEGRMLSFFDNLALEDHKGVSSTMSASQSQSSMHTALPDVTEGTSSDEHTTIQKGRIDNLQAQSLTHKRNAISYPGLFQLDRLQMIIPKDEIELAEILKKIFPKLTLVLIDDPWSILKKLLQNEQFNVVFLHFGNDKVSSSRLMYSVRTSATINSRVPFVYICEDETCIPTDLQSDGVLLKPITCENIESCLRKLDVWHS.

The 71-residue stretch at 28–98 (SKDENLQPSI…RAVNCLLKDD (71 aa)) folds into the PAS domain. Residues 484–554 (PDFAIGSPMS…GRSSLFSRGR (71 aa)) form a disordered region. Positions 491-501 (PMSQDSSNYSS) are enriched in polar residues. Serine 525 is modified (phosphoserine). Over residues 541–550 (PASNGRSSLF) the composition is skewed to polar residues. Residues 589–958 (YKILKPISKG…VEEIKAHPFF (370 aa)) form the Protein kinase domain. Residues 595 to 603 (ISKGAFGSV) and lysine 618 contribute to the ATP site. Residue aspartate 713 is the Proton acceptor of the active site. Phosphoserine is present on serine 748. Polar residues predominate over residues 813–842 (ENSAEDSPTATNTPTSQVDESNIFRSTDSP). 3 disordered regions span residues 813 to 844 (ENSA…SPRV), 1010 to 1035 (KLEE…LRSN), and 1159 to 1185 (SSTM…TSSD). The 99-residue stretch at 959 to 1057 (KSVNWDTILE…RNLDFLNKAN (99 aa)) folds into the AGC-kinase C-terminal domain. Residues 1159–1174 (SSTMSASQSQSSMHTA) show a composition bias toward low complexity. Phosphoserine is present on serine 1211.

The protein belongs to the protein kinase superfamily. Ser/Thr protein kinase family.

The enzyme catalyses L-seryl-[protein] + ATP = O-phospho-L-seryl-[protein] + ADP + H(+). It carries out the reaction L-threonyl-[protein] + ATP = O-phospho-L-threonyl-[protein] + ADP + H(+). In terms of biological role, may facilitate the progression of anaphase through direct or indirect interaction with the cut8 protein. In Schizosaccharomyces pombe (strain 972 / ATCC 24843) (Fission yeast), this protein is Serine/threonine-protein kinase cek1 (cek1).